We begin with the raw amino-acid sequence, 403 residues long: Tryptophan synthase beta chain 1 (403 aa).

Lys-96 is subject to N6-(pyridoxal phosphate)lysine.

It belongs to the TrpB family. In terms of assembly, tetramer of two alpha and two beta chains. Requires pyridoxal 5'-phosphate as cofactor.

The catalysed reaction is (1S,2R)-1-C-(indol-3-yl)glycerol 3-phosphate + L-serine = D-glyceraldehyde 3-phosphate + L-tryptophan + H2O. The protein operates within amino-acid biosynthesis; L-tryptophan biosynthesis; L-tryptophan from chorismate: step 5/5. Functionally, the beta subunit is responsible for the synthesis of L-tryptophan from indole and L-serine. In Wolinella succinogenes (strain ATCC 29543 / DSM 1740 / CCUG 13145 / JCM 31913 / LMG 7466 / NCTC 11488 / FDC 602W) (Vibrio succinogenes), this protein is Tryptophan synthase beta chain 1 (trpB1).